The following is a 1052-amino-acid chain: Error-prone DNA polymerase (1052 aa).

Belongs to the DNA polymerase type-C family. DnaE2 subfamily.

The protein localises to the cytoplasm. The enzyme catalyses DNA(n) + a 2'-deoxyribonucleoside 5'-triphosphate = DNA(n+1) + diphosphate. In terms of biological role, DNA polymerase involved in damage-induced mutagenesis and translesion synthesis (TLS). It is not the major replicative DNA polymerase. The sequence is that of Error-prone DNA polymerase from Bordetella parapertussis (strain 12822 / ATCC BAA-587 / NCTC 13253).